The following is a 61-amino-acid chain: Small ribosomal subunit protein uS14C (61 aa).

Positions 24, 27, 40, and 43 each coordinate Zn(2+).

Belongs to the universal ribosomal protein uS14 family. Zinc-binding uS14 subfamily. As to quaternary structure, part of the 30S ribosomal subunit. Contacts proteins S3 and S10. Requires Zn(2+) as cofactor.

Functionally, binds 16S rRNA, required for the assembly of 30S particles and may also be responsible for determining the conformation of the 16S rRNA at the A site. The sequence is that of Small ribosomal subunit protein uS14C from Enterococcus faecalis (strain ATCC 700802 / V583).